A 94-amino-acid polypeptide reads, in one-letter code: Venom protein 59.1 (94 aa).

Positions 1 to 22 (MNSREMFCVFILFASFFYCSYA) are cleaved as a signal peptide. Cystine bridges form between Cys19/Cys47, Cys26/Cys49, Cys32/Cys50, Cys38/Cys53, Cys61/Cys76, and Cys70/Cys91. Residues 23-94 (EQECNCDKSC…GEALEICLRA (72 aa)) form the IGFBP N-terminal domain.

As to expression, expressed by the venom gland.

It is found in the secreted. The chain is Venom protein 59.1 from Lychas mucronatus (Chinese swimming scorpion).